Reading from the N-terminus, the 250-residue chain is HLA class II histocompatibility antigen, DO alpha chain (250 aa).

A signal peptide spans 1-25 (MALRAGLVLGFHTLMTLLSPQEAGA). The segment at 26–110 (TKADHMGSYG…ERSNRSRAIN (85 aa)) is alpha-1. The Extracellular portion of the chain corresponds to 26–217 (TKADHMGSYG…VPIPPPDAME (192 aa)). Residues asparagine 104 and asparagine 144 are each glycosylated (N-linked (GlcNAc...) asparagine). Residues 111-204 (VPPRVTVLPK…GLDAPLLRHW (94 aa)) form an alpha-2 region. Residues 113-205 (PRVTVLPKSR…LDAPLLRHWE (93 aa)) form the Ig-like C1-type domain. Cysteines 133 and 189 form a disulfide. The segment at 205 to 217 (ELQVPIPPPDAME) is connecting peptide. Residues 218-240 (TLVCALGLAIGLVGFLVGTVLII) traverse the membrane as a helical segment. Over 241–250 (MGTYVSSVPR) the chain is Cytoplasmic.

The protein belongs to the MHC class II family. As to quaternary structure, heterodimer of an alpha chain (DOA) and a beta chain (DOB). Forms a heterotetrameric complex with an HLA-DM molecule during intracellular transport in endosomal/lysosomal compartments in B-cells.

Its subcellular location is the endosome membrane. It is found in the lysosome membrane. Important modulator in the HLA class II restricted antigen presentation pathway by interaction with the HLA-DM molecule in B-cells. Modifies peptide exchange activity of HLA-DM. This chain is HLA class II histocompatibility antigen, DO alpha chain (HLA-DOA), found in Homo sapiens (Human).